Reading from the N-terminus, the 959-residue chain is MMS19 nucleotide excision repair protein (959 aa).

4 HEAT repeats span residues 794–828 (QKLF…ATPQ), 832–871 (KLNI…QQDT), 874–915 (QGHL…YPTF), and 918–956 (LPHK…VGAP).

Belongs to the MET18/MMS19 family. In terms of assembly, component of the CIA complex. Interacts with Xpd and galla-2. Binds to microtubules. In terms of tissue distribution, expressed in embryos (at protein level).

It is found in the cytoplasm. The protein localises to the cytoskeleton. The protein resides in the spindle. Its subcellular location is the nucleus. It localises to the midbody. Key component of the cytosolic iron-sulfur protein assembly (CIA) complex, a multiprotein complex that mediates the incorporation of iron-sulfur cluster into apoproteins specifically involved in DNA metabolism and genomic integrity. In the CIA complex, MMS19 acts as an adapter between early-acting CIA components and a subset of cellular target iron-sulfur proteins. Essential for diploid cell cycles, organ growth and development. Regulates mitosis by binding to Xpd and thereby competing with the Xpd-mediated repression on the Cdk-activating kinase (CAK) complex. Regulates the centrosomal localization of the MT regulator tacc, a downstream target of aurA kinase. Binds to microtubules (MT). Regulates spindle and astral MT growth, MT stability and bundling. In neuroblasts, necessary for timely and coordinated spindle assembly and orientation which is necessary for mitotic progression. In young embryos, the maternal protein is important for progression through mitosis. This Drosophila melanogaster (Fruit fly) protein is MMS19 nucleotide excision repair protein.